Here is a 78-residue protein sequence, read N- to C-terminus: Putative defensin-like protein 288 (78 aa).

The signal sequence occupies residues M1–W21.

This sequence belongs to the DEFL family.

The protein localises to the secreted. The chain is Putative defensin-like protein 288 from Arabidopsis thaliana (Mouse-ear cress).